The sequence spans 1204 residues: DNA-directed RNA polymerase subunit beta' (1204 aa).

Zn(2+)-binding residues include C60, C62, C75, and C78. D449, D451, and D453 together coordinate Mg(2+). Positions 819, 893, 900, and 903 each coordinate Zn(2+).

This sequence belongs to the RNA polymerase beta' chain family. As to quaternary structure, the RNAP catalytic core consists of 2 alpha, 1 beta, 1 beta' and 1 omega subunit. When a sigma factor is associated with the core the holoenzyme is formed, which can initiate transcription. Mg(2+) serves as cofactor. Zn(2+) is required as a cofactor.

The catalysed reaction is RNA(n) + a ribonucleoside 5'-triphosphate = RNA(n+1) + diphosphate. DNA-dependent RNA polymerase catalyzes the transcription of DNA into RNA using the four ribonucleoside triphosphates as substrates. In Bacillus cytotoxicus (strain DSM 22905 / CIP 110041 / 391-98 / NVH 391-98), this protein is DNA-directed RNA polymerase subunit beta'.